A 119-amino-acid polypeptide reads, in one-letter code: DNA-binding protein inhibitor ID-3 (119 aa).

A bHLH domain is found at 28-80; it reads RGKSPSTEEPLSLLDDMNHCYSRLRELVPGVPRGTQLSQVEILQRVIDYILDL. The interaction with IFI204 stretch occupies residues 35–87; the sequence is EEPLSLLDDMNHCYSRLRELVPGVPRGTQLSQVEILQRVIDYILDLQVVLAEP.

As to quaternary structure, homodimer, and heterodimer with other HLH proteins. Interacts with CLOCK and BMAL1. Interacts with COPS5 and COPS7A. Interacts with IFI204. Interacts with GATA4 and NKX2-5. Interacts with ANKRD2; both proteins cooperate in myoblast differentiation. In terms of processing, polyubiquitinated; which is favored by Ifi204 and leads to proteasomal degradation. In terms of tissue distribution, expressed by myoblasts (at protein level).

It is found in the nucleus. Its subcellular location is the cytoplasm. In terms of biological role, transcriptional regulator (lacking a basic DNA binding domain) which negatively regulates the basic helix-loop-helix (bHLH) transcription factors by forming heterodimers and inhibiting their DNA binding and transcriptional activity. Implicated in regulating a variety of cellular processes, including cellular growth, senescence, differentiation, apoptosis, angiogenesis, and neoplastic transformation. Involved in myogenesis by inhibiting skeletal muscle and cardiac myocyte differentiation and promoting muscle precursor cells proliferation. Inhibits the binding of E2A-containing protein complexes to muscle creatine kinase E-box enhancer. Regulates the circadian clock by repressing the transcriptional activator activity of the CLOCK-BMAL1 heterodimer. The sequence is that of DNA-binding protein inhibitor ID-3 (Id3) from Mus musculus (Mouse).